A 361-amino-acid polypeptide reads, in one-letter code: Queuine tRNA-ribosyltransferase (361 aa).

Residue Asp89 is the Proton acceptor of the active site. Substrate-binding positions include 89–93 (DSGGF), Asp143, Gln185, and Gly212. Positions 243–249 (GVGTPED) are RNA binding. Residue Asp262 is the Nucleophile of the active site. Residues 267–271 (TRNAR) are RNA binding; important for wobble base 34 recognition. The Zn(2+) site is built by Cys300, Cys302, Cys305, and His331.

It belongs to the queuine tRNA-ribosyltransferase family. As to quaternary structure, homodimer. Within each dimer, one monomer is responsible for RNA recognition and catalysis, while the other monomer binds to the replacement base PreQ1. The cofactor is Zn(2+).

The catalysed reaction is 7-aminomethyl-7-carbaguanine + guanosine(34) in tRNA = 7-aminomethyl-7-carbaguanosine(34) in tRNA + guanine. It participates in tRNA modification; tRNA-queuosine biosynthesis. Its function is as follows. Catalyzes the base-exchange of a guanine (G) residue with the queuine precursor 7-aminomethyl-7-deazaguanine (PreQ1) at position 34 (anticodon wobble position) in tRNAs with GU(N) anticodons (tRNA-Asp, -Asn, -His and -Tyr). Catalysis occurs through a double-displacement mechanism. The nucleophile active site attacks the C1' of nucleotide 34 to detach the guanine base from the RNA, forming a covalent enzyme-RNA intermediate. The proton acceptor active site deprotonates the incoming PreQ1, allowing a nucleophilic attack on the C1' of the ribose to form the product. After dissociation, two additional enzymatic reactions on the tRNA convert PreQ1 to queuine (Q), resulting in the hypermodified nucleoside queuosine (7-(((4,5-cis-dihydroxy-2-cyclopenten-1-yl)amino)methyl)-7-deazaguanosine). The polypeptide is Queuine tRNA-ribosyltransferase (Nitrosomonas eutropha (strain DSM 101675 / C91 / Nm57)).